The sequence spans 778 residues: MKTRYSVLSVAMTAAFYTQYAQADLREQCLLGVPHFQGEEVTGDQTMMPIEIEADNAVINQPKDATYTGDVAIKQGNRSLFADEVRVEQNGEQERRAFLKGSYRYQDNLIQAHGRDAAMDLGSETAELQNTEFQLVGRQGRGTAESGSFNHNKRILKNATFTACLPNDNAWSIEGNEMIQHIDEEYAEIWHARFKVLGMPVFYSPYLQFPIGDRRRSGLLIPNFHRSSKDGFAYSQPFYWNIAPNMDATITPTYYSRRGWQISPEYRYLTKLGEGIVAGEYIGKDRLDEYRPDDNDRKRYLMHWRHNMSFLTGWRLYVDYTKVSDKRYFSDFDSEYGSSTDGYATQQFKLGYYQPNYNLSISGKKFQTFDELDVGPYRVLPQIDFNYYNDELVKGGDFKLFAQTARFENDSKLMPKAWRFHVEPTLNFPLANRYGSLNFETKLYATHYLQEKGSSKQADDMDKNVTRIIPQVKVDLQTVLEADKQLFKGFNQTFEPRVQYVYRPYKDQSNIGSGLNQSVSFGYDSALLQSDYFSLFNDRRYSGLDRISSANLITAGGTNRFFNEKTGVEVFNFSIGQTYYLSPSKIDDLSQNSTTKRSSSWALESNWKFHRKWNWHGAYQYDTRLNQTSLANTSLQYKPSQDKLVQLSYRFASKDYINQNLRSNTYGQDIKQVGAVVGWELTDRVAFMASHYHDIALKKPVESQLSVNYNTCCWSANVYVARKLTATPIGSPDTINDLYYDNKFGVNFELRFGTNYSSGVRKMLKKGMIPYTEQYGIN.

An N-terminal signal peptide occupies residues 1 to 23 (MKTRYSVLSVAMTAAFYTQYAQA).

The protein belongs to the LptD family. Component of the lipopolysaccharide transport and assembly complex. Interacts with LptE and LptA.

The protein localises to the cell outer membrane. Together with LptE, is involved in the assembly of lipopolysaccharide (LPS) at the surface of the outer membrane. The chain is LPS-assembly protein LptD from Actinobacillus pleuropneumoniae serotype 5b (strain L20).